We begin with the raw amino-acid sequence, 234 residues long: Glucosamine-6-phosphate deaminase (234 aa).

Residue aspartate 62 is the Proton acceptor; for enolization step of the active site. Residue asparagine 128 is the For ring-opening step of the active site. The active-site Proton acceptor; for ring-opening step is histidine 130. Glutamate 135 serves as the catalytic For ring-opening step.

This sequence belongs to the glucosamine/galactosamine-6-phosphate isomerase family. NagB subfamily.

The catalysed reaction is alpha-D-glucosamine 6-phosphate + H2O = beta-D-fructose 6-phosphate + NH4(+). Its pathway is amino-sugar metabolism; N-acetylneuraminate degradation; D-fructose 6-phosphate from N-acetylneuraminate: step 5/5. Functionally, catalyzes the reversible isomerization-deamination of glucosamine 6-phosphate (GlcN6P) to form fructose 6-phosphate (Fru6P) and ammonium ion. This is Glucosamine-6-phosphate deaminase from Streptococcus pyogenes serotype M1.